The sequence spans 132 residues: U10-hexatoxin-Hi1a (132 aa).

The N-terminal stretch at 1–20 (MKGFIVFSLSLCLVFTVCLA) is a signal peptide. A propeptide spanning residues 21–30 (EDELMKEAVR) is cleaved from the precursor.

In terms of processing, contains 5 disulfide bonds. In terms of tissue distribution, expressed by the venom gland.

Its subcellular location is the secreted. Functionally, probable ion channel inhibitor. The polypeptide is U10-hexatoxin-Hi1a (Hadronyche infensa (Fraser island funnel-web spider)).